The sequence spans 1150 residues: Solute carrier family 12 member 6 (1150 aa).

Over 1–135 the chain is Cytoplasmic; sequence MHPPETTTKM…DEYFDKNLAL (135 aa). Residues 20–66 are disordered; the sequence is TKIDDIPGLSDTSPDLSSRSSSRVRFSSRESVPETSRSEPMSEMSGA. The span at 28–45 shows a compositional bias: low complexity; it reads LSDTSPDLSSRSSSRVRF. 2 positions are modified to phosphoserine: S32 and S120. The chain crosses the membrane as a discontinuously helical span at residues 136-158; that stretch reads FEEEMDTRPKVSSLLNRMANYTN. 2 residues coordinate K(+): S147 and S148. S148 is subject to Phosphoserine. N151 provides a ligand contact to chloride. Residues 159 to 165 lie on the Extracellular side of the membrane; sequence LTQGAKE. A disordered region spans residues 161–181; it reads QGAKEHEEAENITEGKKKPTK. The segment covering 163–177 has biased composition (basic and acidic residues); it reads AKEHEEAENITEGKK. The chain crosses the membrane as a helical span at residues 166 to 188; the sequence is HEEAENITEGKKKPTKTPQMGTF. At 189-211 the chain is on the cytoplasmic side; sequence MGVYLPCLQNIFGVILFLRLTWV. The chain crosses the membrane as a helical span at residues 212-245; sequence VGTAGVLQAFAIVLICCCCTMLTAISMSAIATNG. Residues 246 to 263 lie on the Extracellular side of the membrane; the sequence is VVPAGGSYFMISRALGPE. 2 consecutive transmembrane segments (helical) span residues 264 to 287 and 288 to 316; these read FGGA…ILGA and IEIF…AMLN. The Extracellular segment spans residues 317–433; sequence NMRVYGTAFL…FVHNNVTSIQ (117 aa). C375 and C390 are disulfide-bonded. N-linked (GlcNAc...) asparagine glycans are attached at residues N379, N398, N411, and N428. A disulfide bond links C410 and C420. Residues 434-454 traverse the membrane as a helical segment; it reads GIPGLASGIITENLWSNYLPK. I443, T444, and N446 together coordinate K(+). Residues I443 and T444 each contribute to the chloride site. Residues L447 and W448 each contribute to the chloride site. The Cytoplasmic portion of the chain corresponds to 455 to 464; the sequence is GEIIEKPSAK. The chain crosses the membrane as a helical span at residues 465 to 487; sequence SSDVLGSLNHEYVLVDITTSFTL. At 488-518 the chain is on the extracellular side; sequence LVGIFFPSVTGIMAGSNRSGDLKDAQKSIPI. Residues 519–545 traverse the membrane as a helical segment; it reads GTILAILTTSFVYLSNVVLFGACIEGV. The Cytoplasmic segment spans residues 546–568; it reads VLRDKFGDAVKGNLVVGTLSWPS. 2 consecutive transmembrane segments (helical) span residues 569 to 589 and 590 to 612; these read PWVI…QSLT and GAPR…VFGH. I603 provides a ligand contact to chloride. At 613 to 629 the chain is on the cytoplasmic side; that stretch reads SKANGEPTWALLLTAAI. Transmembrane regions (helical) follow at residues 630–649 and 650–665; these read AELG…LSMF and FLMC…ALQT. Topologically, residues 666 to 1150 are cytoplasmic; it reads LLRTPNWRPR…GGSEVITIYS (485 aa). Residues 682–691 form a scissor helix region; that stretch reads ALSFMGMSIC. S736 is subject to Phosphoserine. Phosphothreonine is present on T778. S981 is modified (phosphoserine). A Phosphothreonine; by OXSR1 and STK39 modification is found at T991. 3 positions are modified to phosphoserine: S1023, S1029, and S1032. The residue at position 1048 (T1048) is a Phosphothreonine; by OXSR1 and STK39. A Phosphotyrosine modification is found at Y1121. Residues 1133 to 1150 form an interaction with CKB region; it reads ERVLLVRGGGSEVITIYS.

The protein belongs to the SLC12A transporter family. K/Cl co-transporter subfamily. As to quaternary structure, homodimer; adopts a domain-swap conformation at the scissor helices connecting the transmembrane domain and C-terminal domain. Heterodimer with K-Cl cotransporter SLC12A5. Interacts (via C-terminus) with CKB; the interaction may be required for potassium-chloride cotransport activity. Phosphorylated, phosphorylation regulates transporter activity. Phosphorylated at Thr-991 and Thr-1048 by OXSR1/OSR1 and STK39/SPAK downstream of WNK kinases (WNK1, WNK2, WNK3 or WNK4), inhibiting the potassium-chloride cotransport activity. Post-translationally, N-glycosylated. As to expression, expressed in brain (at protein level). Highly expressed in heart, brain and kidney. Detected at lower levels in skeletal muscle, placenta, lung and pancreas. Detected in umbilical vein endothelial cells. In terms of tissue distribution, more abundant in kidney. Testis specific.

The protein resides in the cell membrane. Its subcellular location is the basolateral cell membrane. It catalyses the reaction K(+)(in) + chloride(in) = K(+)(out) + chloride(out). With respect to regulation, inhibited following phosphorylation by OXSR1/OSR1 and STK39/SPAK: phosphorylation takes place downstream of WNK kinases (WNK1, WNK2, WNK3 or WNK4) in response to hyperosmotic stress and subsequent cell shrinkage. Activated by N-ethylmaleimide (NEM). Inhibited by DIOA, bumetanide and furosemide. Functionally, mediates electroneutral potassium-chloride cotransport when activated by cell swelling. May contribute to cell volume homeostasis in single cells. Its function is as follows. Mediates electroneutral potassium-chloride cotransport when activated by cell swelling. May contribute to cell volume homeostasis in single cells. Mediates electroneutral potassium-chloride cotransport when activated by cell swelling. May contribute to cell volume homeostasis in single cells. This is Solute carrier family 12 member 6 from Homo sapiens (Human).